A 318-amino-acid chain; its full sequence is Deacetoxycephalosporin C hydroxylase (318 aa).

In terms of domain architecture, Fe2OG dioxygenase spans Asp158 to Pro271.

It belongs to the iron/ascorbate-dependent oxidoreductase family. As to quaternary structure, monomer. Fe cation is required as a cofactor.

The catalysed reaction is deacetoxycephalosporin C + 2-oxoglutarate + O2 = deacetylcephalosporin C + succinate + CO2. It functions in the pathway antibiotic biosynthesis; cephalosporin C biosynthesis. In terms of biological role, hydroxylation of desacetoxicephalosporin C in 3'position to form deacetylcephalosporin C. The protein is Deacetoxycephalosporin C hydroxylase (cefF) of Streptomyces clavuligerus.